The following is a 418-amino-acid chain: Tyrosine--tRNA ligase (418 aa).

Tyr34 lines the L-tyrosine pocket. Residues Pro39–His48 carry the 'HIGH' region motif. L-tyrosine contacts are provided by Tyr169 and Gln173. The short motif at Lys229 to Ser233 is the 'KMSKS' region element. Lys232 contacts ATP. The S4 RNA-binding domain maps to Leu352–Tyr418.

This sequence belongs to the class-I aminoacyl-tRNA synthetase family. TyrS type 1 subfamily. As to quaternary structure, homodimer.

The protein localises to the cytoplasm. The catalysed reaction is tRNA(Tyr) + L-tyrosine + ATP = L-tyrosyl-tRNA(Tyr) + AMP + diphosphate + H(+). Functionally, catalyzes the attachment of tyrosine to tRNA(Tyr) in a two-step reaction: tyrosine is first activated by ATP to form Tyr-AMP and then transferred to the acceptor end of tRNA(Tyr). The polypeptide is Tyrosine--tRNA ligase (Streptococcus thermophilus (strain ATCC BAA-491 / LMD-9)).